A 679-amino-acid chain; its full sequence is Patatin-like phospholipase 1 (679 aa).

Disordered regions lie at residues 19–45 (FSDDEKDDSYEREKQVYSGSETQNAEN) and 155–194 (GEYEKRNTSSYDNTESVQNTVGSEKEETENKNEETSNYNS). Composition is skewed to polar residues over residues 35–45 (YSGSETQNAEN) and 162–176 (TSSYDNTESVQNTVG). Over residues 177–188 (SEKEETENKNEE) the composition is skewed to basic and acidic residues. Residues 338–544 (LSLDGGGILT…KASNPALIAL (207 aa)) form the PNPLA domain. Residues 381–385 (GTSAG) carry the GXSXG motif. The active-site Nucleophile is S383. Residue D531 is the Proton acceptor of the active site. A DGA/G motif is present at residues 531–533 (DGA).

The protein belongs to the patatin family.

The protein localises to the cytoplasm. The enzyme catalyses a 1,2-diacyl-sn-glycero-3-phosphocholine + H2O = a 1-acyl-sn-glycero-3-phosphocholine + a fatty acid + H(+). It catalyses the reaction 1,2-dihexadecanoyl-sn-glycero-3-phosphocholine + H2O = 1-hexadecanoyl-sn-glycero-3-phosphocholine + hexadecanoate + H(+). In terms of biological role, hydrolyzes the ester bond of the fatty acyl group attached at the sn-2 position of phospholipids such as phosphatidylcholine. Involved in gametogenesis; however, it is not clear whether it is involved in gametocytes development in host erythrocytes or in gametocyte activation in the mosquito midgut. Involved in gametocyte development in host erythrocytes; however, not involved in gametocytes activation including male gamete exflagellation. Involved in the rounding up of gametocytes following activation in the mosquito midgut; however, not required for gametocyte development in host erythrocytes. Required for exflagellation of activated male gametocytes. Involved in gametocytes egress from host erythrocytes by promoting the relocalization of perforin-like protein PLP2-containing vesicles to the periphery of gametocytes; PLP2 secretion is required for permeabilization of the erythrocyte membrane and thus, promotes gametocyte egress. Dispensable for asexual blood stage development. This is Patatin-like phospholipase 1 from Plasmodium falciparum (isolate NF54).